The following is a 326-amino-acid chain: DNA-binding death effector domain-containing protein 2 (326 aa).

The DED domain occupies 25–104 (SLHRMFEVVG…RHDLLPHLAR (80 aa)). The Nuclear localization signal signature appears at 104-109 (RKRRRP). The interval 104 to 194 (RKRRRPVSPE…PARPSSEGKV (91 aa)) is disordered. Positions 136–146 (SSSSANSQQGQ) are enriched in low complexity. Residues 155-173 (KRQRRSRGRPSGGARRRRR) carry the Bipartite nuclear localization signal motif. Positions 155-174 (KRQRRSRGRPSGGARRRRRG) are enriched in basic residues. Low complexity predominate over residues 175 to 191 (APAAPQQQSEPARPSSE).

In terms of assembly, interacts with CASP8, CASP10 and GTF3C3. Homodimerizes and heterodimerizes with DEDD. In terms of tissue distribution, expressed in most tissues. High levels were found in liver, kidney, heart, ovary, spleen, testes, skeletal muscle and peripheral blood leukocytes. Expression was absent or low in colon and small intestine. Expression is relatively high in the tumor cell lines chronic myologenous leukemia K-562 and the colorectal adenocarcinoma SW480. Expression is moderate in the cervical carcinoma HeLa, the Burkitt's lymphoma Raji, the lung carcinoma A-549, and the melanoma G-361. In contrast, two leukemia cell lines, HL-60 (promyelocytic leukemia) and MOLT-4 (lymphoblastic leukemia), show relatively low levels.

It localises to the nucleus. It is found in the nucleolus. May play a critical role in death receptor-induced apoptosis and may target CASP8 and CASP10 to the nucleus. May regulate degradation of intermediate filaments during apoptosis. May play a role in the general transcription machinery in the nucleus and might be an important regulator of the activity of GTF3C3. The sequence is that of DNA-binding death effector domain-containing protein 2 (DEDD2) from Homo sapiens (Human).